Reading from the N-terminus, the 166-residue chain is MFPMVTEFMNYGQQTVRAARYIGQGFMITLSHANRLPVTIQYPYEKLITSERFRGRIHFEFDKCIACEVCVRVCPIDLPVVDWKLETDIRKKRLLNYSIDFGVCIFCGNCVEYCPTNCLSMTEEYELSTYDRHELNYNQIALGRLPMSIIDDYTIRTILNLPEIKT.

4Fe-4S ferredoxin-type domains are found at residues 55-84 (GRIHFEFDKCIACEVCVRVCPIDLPVVDWK) and 95-124 (LNYSIDFGVCIFCGNCVEYCPTNCLSMTEE). The [4Fe-4S] cluster site is built by C64, C67, C70, C74, C104, C107, C110, and C114.

This sequence belongs to the complex I 23 kDa subunit family. In terms of assembly, NDH is composed of at least 16 different subunits, 5 of which are encoded in the nucleus. It depends on [4Fe-4S] cluster as a cofactor.

It is found in the plastid. The protein localises to the chloroplast thylakoid membrane. The enzyme catalyses a plastoquinone + NADH + (n+1) H(+)(in) = a plastoquinol + NAD(+) + n H(+)(out). It catalyses the reaction a plastoquinone + NADPH + (n+1) H(+)(in) = a plastoquinol + NADP(+) + n H(+)(out). In terms of biological role, NDH shuttles electrons from NAD(P)H:plastoquinone, via FMN and iron-sulfur (Fe-S) centers, to quinones in the photosynthetic chain and possibly in a chloroplast respiratory chain. The immediate electron acceptor for the enzyme in this species is believed to be plastoquinone. Couples the redox reaction to proton translocation, and thus conserves the redox energy in a proton gradient. In Enydra sessilis (Smallray swampwort), this protein is NAD(P)H-quinone oxidoreductase subunit I, chloroplastic.